Reading from the N-terminus, the 419-residue chain is Serine hydroxymethyltransferase (419 aa).

(6S)-5,6,7,8-tetrahydrofolate is bound by residues Leu-121 and 125–127 (GHL). At Lys-230 the chain carries N6-(pyridoxal phosphate)lysine. Residue 354–356 (SPF) participates in (6S)-5,6,7,8-tetrahydrofolate binding.

The protein belongs to the SHMT family. As to quaternary structure, homodimer. Pyridoxal 5'-phosphate serves as cofactor.

The protein resides in the cytoplasm. The enzyme catalyses (6R)-5,10-methylene-5,6,7,8-tetrahydrofolate + glycine + H2O = (6S)-5,6,7,8-tetrahydrofolate + L-serine. The protein operates within one-carbon metabolism; tetrahydrofolate interconversion. It participates in amino-acid biosynthesis; glycine biosynthesis; glycine from L-serine: step 1/1. Functionally, catalyzes the reversible interconversion of serine and glycine with tetrahydrofolate (THF) serving as the one-carbon carrier. This reaction serves as the major source of one-carbon groups required for the biosynthesis of purines, thymidylate, methionine, and other important biomolecules. Also exhibits THF-independent aldolase activity toward beta-hydroxyamino acids, producing glycine and aldehydes, via a retro-aldol mechanism. The polypeptide is Serine hydroxymethyltransferase (Prochlorococcus marinus (strain SARG / CCMP1375 / SS120)).